The following is a 183-amino-acid chain: dCTP deaminase (183 aa).

DCTP is bound at residue 106 to 111 (KSTYAR). Glutamate 132 functions as the Proton donor/acceptor in the catalytic mechanism. DCTP is bound by residues glutamine 151, tyrosine 165, and glutamine 175.

It belongs to the dCTP deaminase family. As to quaternary structure, homotrimer.

It carries out the reaction dCTP + H2O + H(+) = dUTP + NH4(+). It functions in the pathway pyrimidine metabolism; dUMP biosynthesis; dUMP from dCTP (dUTP route): step 1/2. In terms of biological role, catalyzes the deamination of dCTP to dUTP. The chain is dCTP deaminase from Gluconobacter oxydans (strain 621H) (Gluconobacter suboxydans).